We begin with the raw amino-acid sequence, 237 residues long: ATP synthase subunit a (237 aa).

5 consecutive transmembrane segments (helical) span residues 17–37 (LSDM…AVAA), 75–95 (FLTL…LGLP), 112–132 (DATV…YYGV), 179–201 (ILLG…GAAI), and 214–234 (GTIQ…HKVS).

It belongs to the ATPase A chain family. As to quaternary structure, F-type ATPases have 2 components, CF(1) - the catalytic core - and CF(0) - the membrane proton channel. CF(1) has five subunits: alpha(3), beta(3), gamma(1), delta(1), epsilon(1). CF(0) has three main subunits: a(1), b(2) and c(9-12). The alpha and beta chains form an alternating ring which encloses part of the gamma chain. CF(1) is attached to CF(0) by a central stalk formed by the gamma and epsilon chains, while a peripheral stalk is formed by the delta and b chains.

The protein resides in the cell membrane. Functionally, key component of the proton channel; it plays a direct role in the translocation of protons across the membrane. In Geobacillus kaustophilus (strain HTA426), this protein is ATP synthase subunit a.